Consider the following 684-residue polypeptide: Kelch repeat and BTB domain-containing protein 7 (684 aa).

Positions 1–27 (MQSREDVPRSRRLASPRGGRRPKRISK) are disordered. The span at 10-26 (SRRLASPRGGRRPKRIS) shows a compositional bias: basic residues. A Phosphoserine modification is found at Ser-29. A BTB domain is found at 63-138 (CDVTIEVVTP…CYTGRVSLSE (76 aa)). Kelch repeat units lie at residues 386 to 435 (AVCV…YLNG), 436 to 484 (YIYI…VVQN), 486 to 523 (LYAV…VFND), 524 to 564 (EIYC…IVNH), and 567 to 616 (KLLL…CLCA). Residues 630–666 (ITEEDDARSESSTEWDLDGFSELDSESGSSSSFSDDE) are disordered. A compositionally biased stretch (acidic residues) spans 631 to 654 (TEEDDARSESSTEWDLDGFSELDS). An ATG8 interaction motif (AIM) motif is present at residues 668–671 (WVQV).

In terms of assembly, core component of a BCR3 (BTB-CUL3-RBX1) E3 ubiquitin ligase complex, also named Cul3-RING ubiquitin ligase complex CUL3(KBTBD6/7), composed of CUL3, RBX1, KBTBD6 and KBTBD7. Interacts with GABARAP; the interaction is direct and is required for the ubiquitination of TIAM1. Interacts with GABARAPL1, GABARAPL2 and MAP1LC3B; the interaction is direct.

It localises to the cytoplasm. It is found in the nucleus. Its pathway is protein modification; protein ubiquitination. Functionally, as part of the CUL3(KBTBD6/7) E3 ubiquitin ligase complex functions as a substrate adapter for the RAC1 guanine exchange factor (GEF) TIAM1, mediating its 'Lys-48' ubiquitination and proteasomal degradation. By controlling this ubiquitination, regulates RAC1 signal transduction and downstream biological processes including the organization of the cytoskeleton, cell migration and cell proliferation. Ubiquitination of TIAM1 requires the membrane-associated protein GABARAP which may restrict locally the activity of the complex. The chain is Kelch repeat and BTB domain-containing protein 7 from Homo sapiens (Human).